Here is an 820-residue protein sequence, read N- to C-terminus: Serine/threonine-protein phosphatase 4 regulatory subunit 3-B (820 aa).

In terms of domain architecture, WH1 spans 1–100 (MSDTRRRVKV…DEIWEKICQV (100 aa)). The span at 682 to 694 (ELWFNEDDEEEGE) shows a compositional bias: acidic residues. Disordered stretches follow at residues 682 to 711 (ELWF…DFPE) and 750 to 820 (AANG…RLGS). The segment covering 701 to 711 (EKTKPEDDFPE) has biased composition (basic and acidic residues). Polar residues-rich tracts occupy residues 750–761 (AANGANSTNSKS) and 768–790 (PATS…STKG). The span at 798-809 (YPDDEDEEEEED) shows a compositional bias: acidic residues.

It belongs to the SMEK family. As to quaternary structure, serine/threonine-protein phosphatase 4 (PP4) occurs in different assemblies of the catalytic and one or more regulatory subunits.

Its function is as follows. Regulatory subunit of serine/threonine-protein phosphatase 4 (PP4). The polypeptide is Serine/threonine-protein phosphatase 4 regulatory subunit 3-B (Xenopus laevis (African clawed frog)).